Reading from the N-terminus, the 216-residue chain is Large ribosomal subunit protein uL3 (216 aa).

Glutamine 157 carries the N5-methylglutamine modification.

It belongs to the universal ribosomal protein uL3 family. In terms of assembly, part of the 50S ribosomal subunit. Forms a cluster with proteins L14 and L19. In terms of processing, methylated by PrmB.

One of the primary rRNA binding proteins, it binds directly near the 3'-end of the 23S rRNA, where it nucleates assembly of the 50S subunit. In Xanthomonas oryzae pv. oryzae (strain MAFF 311018), this protein is Large ribosomal subunit protein uL3.